A 279-amino-acid polypeptide reads, in one-letter code: Replication protein A 32 kDa subunit A (279 aa).

A disordered region spans residues methionine 1–proline 39. The segment at residues valine 71–valine 145 is a DNA-binding region (OB). The disordered stretch occupies residues glycine 181–glycine 210. The span at glutamate 190 to serine 199 shows a compositional bias: polar residues.

It belongs to the replication factor A protein 2 family. As to quaternary structure, heterotrimer of RPA1, RPA2 and RPA3 (canonical replication protein A complex). Interacts with RPA1A, RPA1B and RPA3. In terms of processing, phosphorylated in a cell-cycle-dependent manner (from the S phase until mitosis). In response to DNA damage, recruited to DNA-repair nuclear foci, as a hypophosphorylated form. In terms of tissue distribution, expressed in root tips, roots, shoot apical meristem (SAM), young leaves, flag leaves and ears, and at lower levels in mature leaves.

The protein resides in the nucleus. Component of the replication protein A complex (RPA) required for DNA recombination, repair and replication. The activity of RPA is mediated by single-stranded DNA binding and protein interactions. The sequence is that of Replication protein A 32 kDa subunit A (RPA2A) from Oryza sativa subsp. japonica (Rice).